Reading from the N-terminus, the 204-residue chain is Pyridoxal 5'-phosphate synthase subunit PdxT (204 aa).

52 to 54 (GES) is a binding site for L-glutamine. C84 acts as the Nucleophile in catalysis. Residues R116 and 143-144 (IR) each bind L-glutamine. Catalysis depends on charge relay system residues H184 and E186.

It belongs to the glutaminase PdxT/SNO family. In terms of assembly, in the presence of PdxS, forms a dodecamer of heterodimers. Only shows activity in the heterodimer.

It catalyses the reaction aldehydo-D-ribose 5-phosphate + D-glyceraldehyde 3-phosphate + L-glutamine = pyridoxal 5'-phosphate + L-glutamate + phosphate + 3 H2O + H(+). The catalysed reaction is L-glutamine + H2O = L-glutamate + NH4(+). It participates in cofactor biosynthesis; pyridoxal 5'-phosphate biosynthesis. In terms of biological role, catalyzes the hydrolysis of glutamine to glutamate and ammonia as part of the biosynthesis of pyridoxal 5'-phosphate. The resulting ammonia molecule is channeled to the active site of PdxS. The polypeptide is Pyridoxal 5'-phosphate synthase subunit PdxT (Pyrobaculum aerophilum (strain ATCC 51768 / DSM 7523 / JCM 9630 / CIP 104966 / NBRC 100827 / IM2)).